We begin with the raw amino-acid sequence, 328 residues long: Ribosomal RNA small subunit methyltransferase H (328 aa).

S-adenosyl-L-methionine contacts are provided by residues 37–39 (GGH), aspartate 57, phenylalanine 83, aspartate 104, and glutamine 111.

This sequence belongs to the methyltransferase superfamily. RsmH family.

It localises to the cytoplasm. The catalysed reaction is cytidine(1402) in 16S rRNA + S-adenosyl-L-methionine = N(4)-methylcytidine(1402) in 16S rRNA + S-adenosyl-L-homocysteine + H(+). Specifically methylates the N4 position of cytidine in position 1402 (C1402) of 16S rRNA. In Neisseria meningitidis serogroup B (strain ATCC BAA-335 / MC58), this protein is Ribosomal RNA small subunit methyltransferase H.